A 123-amino-acid chain; its full sequence is Large ribosomal subunit protein bL12 (123 aa).

It belongs to the bacterial ribosomal protein bL12 family. Homodimer. Part of the ribosomal stalk of the 50S ribosomal subunit. Forms a multimeric L10(L12)X complex, where L10 forms an elongated spine to which 2 to 4 L12 dimers bind in a sequential fashion. Binds GTP-bound translation factors.

Functionally, forms part of the ribosomal stalk which helps the ribosome interact with GTP-bound translation factors. Is thus essential for accurate translation. This is Large ribosomal subunit protein bL12 from Psychrobacter arcticus (strain DSM 17307 / VKM B-2377 / 273-4).